The primary structure comprises 262 residues: Small ribosomal subunit protein eS1 (262 aa).

This sequence belongs to the eukaryotic ribosomal protein eS1 family. In terms of assembly, component of the small ribosomal subunit. Mature ribosomes consist of a small (40S) and a large (60S) subunit. The 40S subunit contains about 32 different proteins and 1 molecule of RNA (18S). The 60S subunit contains about 42 different proteins and 3 molecules of RNA (28S, 5.8S and 5S).

It localises to the cytoplasm. Its function is as follows. Component of the ribosome, a large ribonucleoprotein complex responsible for the synthesis of proteins in the cell. The small ribosomal subunit (SSU) binds messenger RNAs (mRNAs) and translates the encoded message by selecting cognate aminoacyl-transfer RNA (tRNA) molecules. The large subunit (LSU) contains the ribosomal catalytic site termed the peptidyl transferase center (PTC), which catalyzes the formation of peptide bonds, thereby polymerizing the amino acids delivered by tRNAs into a polypeptide chain. The nascent polypeptides leave the ribosome through a tunnel in the LSU and interact with protein factors that function in enzymatic processing, targeting, and the membrane insertion of nascent chains at the exit of the ribosomal tunnel. In Plasmodium falciparum (isolate 3D7), this protein is Small ribosomal subunit protein eS1.